We begin with the raw amino-acid sequence, 410 residues long: Elongation factor Tu, chloroplastic (410 aa).

In terms of domain architecture, tr-type G spans 10–213 (KPHLNIGTIG…TVDEYIPTPK (204 aa)). A G1 region spans residues 19–26 (GHVDHGKT). Residue 19–26 (GHVDHGKT) participates in GTP binding. Position 26 (T26) interacts with Mg(2+). Positions 60 to 64 (GITIN) are G2. Positions 81-84 (DCPG) are G3. Residues 81–85 (DCPGH) and 136–139 (NKAD) contribute to the GTP site. Residues 136–139 (NKAD) form a G4 region. A G5 region spans residues 174 to 176 (SAI).

The protein belongs to the TRAFAC class translation factor GTPase superfamily. Classic translation factor GTPase family. EF-Tu/EF-1A subfamily.

The protein localises to the plastid. The protein resides in the chloroplast. The enzyme catalyses GTP + H2O = GDP + phosphate + H(+). GTP hydrolase that promotes the GTP-dependent binding of aminoacyl-tRNA to the A-site of ribosomes during protein biosynthesis. This is Elongation factor Tu, chloroplastic (tufA) from Codium fragile (Dead man's fingers).